The primary structure comprises 231 residues: Uracil-DNA glycosylase (231 aa).

The active-site Proton acceptor is D74.

The protein belongs to the uracil-DNA glycosylase (UDG) superfamily. UNG family.

Its subcellular location is the cytoplasm. It carries out the reaction Hydrolyzes single-stranded DNA or mismatched double-stranded DNA and polynucleotides, releasing free uracil.. Functionally, excises uracil residues from the DNA which can arise as a result of misincorporation of dUMP residues by DNA polymerase or due to deamination of cytosine. The polypeptide is Uracil-DNA glycosylase (Campylobacter jejuni subsp. jejuni serotype O:2 (strain ATCC 700819 / NCTC 11168)).